We begin with the raw amino-acid sequence, 289 residues long: Diaminopimelate epimerase (289 aa).

3 residues coordinate substrate: asparagine 13, glutamine 52, and asparagine 72. Cysteine 81 acts as the Proton donor in catalysis. Residues 82-83 (GN), asparagine 167, asparagine 201, and 219-220 (ER) contribute to the substrate site. Residue cysteine 228 is the Proton acceptor of the active site. 229–230 (GT) contributes to the substrate binding site.

The protein belongs to the diaminopimelate epimerase family. In terms of assembly, homodimer.

It is found in the cytoplasm. It catalyses the reaction (2S,6S)-2,6-diaminopimelate = meso-2,6-diaminopimelate. It functions in the pathway amino-acid biosynthesis; L-lysine biosynthesis via DAP pathway; DL-2,6-diaminopimelate from LL-2,6-diaminopimelate: step 1/1. Its function is as follows. Catalyzes the stereoinversion of LL-2,6-diaminopimelate (L,L-DAP) to meso-diaminopimelate (meso-DAP), a precursor of L-lysine and an essential component of the bacterial peptidoglycan. The chain is Diaminopimelate epimerase from Caulobacter sp. (strain K31).